The sequence spans 330 residues: ADP-L-glycero-D-manno-heptose-6-epimerase (330 aa).

Residues 11 to 12, 32 to 33, Q39, Q54, 75 to 79, and N92 each bind NADP(+); these read FI, DD, and QGACA. Y139 functions as the Proton acceptor in the catalytic mechanism. Position 143 (K143) interacts with NADP(+). N168 contributes to the substrate binding site. Positions 169 and 177 each coordinate NADP(+). K177 (proton acceptor) is an active-site residue. Residues R179, H186, 200–203, R213, and Y292 each bind substrate; that span reads FGEH.

The protein belongs to the NAD(P)-dependent epimerase/dehydratase family. HldD subfamily. In terms of assembly, homopentamer. NADP(+) is required as a cofactor.

The enzyme catalyses ADP-D-glycero-beta-D-manno-heptose = ADP-L-glycero-beta-D-manno-heptose. It participates in nucleotide-sugar biosynthesis; ADP-L-glycero-beta-D-manno-heptose biosynthesis; ADP-L-glycero-beta-D-manno-heptose from D-glycero-beta-D-manno-heptose 7-phosphate: step 4/4. Its function is as follows. Catalyzes the interconversion between ADP-D-glycero-beta-D-manno-heptose and ADP-L-glycero-beta-D-manno-heptose via an epimerization at carbon 6 of the heptose. This Pseudomonas aeruginosa (strain UCBPP-PA14) protein is ADP-L-glycero-D-manno-heptose-6-epimerase.